We begin with the raw amino-acid sequence, 142 residues long: Universal stress protein D (142 aa).

This sequence belongs to the universal stress protein A family.

The protein resides in the cytoplasm. Functionally, required for resistance to DNA-damaging agents. The protein is Universal stress protein D (uspD) of Escherichia coli (strain K12).